Reading from the N-terminus, the 100-residue chain is Urease subunit gamma (100 aa).

Belongs to the urease gamma subunit family. In terms of assembly, heterotrimer of UreA (gamma), UreB (beta) and UreC (alpha) subunits. Three heterotrimers associate to form the active enzyme.

It localises to the cytoplasm. The catalysed reaction is urea + 2 H2O + H(+) = hydrogencarbonate + 2 NH4(+). It functions in the pathway nitrogen metabolism; urea degradation; CO(2) and NH(3) from urea (urease route): step 1/1. In Marinomonas sp. (strain MWYL1), this protein is Urease subunit gamma.